The following is a 177-amino-acid chain: MSEEIKKDDLQEEVEATETEETVEEVIEEIPEKSELELANERADEFENKYLRAHAEMQNIQRRSSEERQQLQRYRSQDLAKAILPSLDNLERALAVEGLTDDVKKGLEMTRDSLIQALKEEGVEEVEVDSFDHNFHMAVQTLPADDEHPADSIAEVFQKGYKLHERLLRPAMVVVYN.

The segment at 1-26 (MSEEIKKDDLQEEVEATETEETVEEV) is disordered. A compositionally biased stretch (acidic residues) spans 10–26 (LQEEVEATETEETVEEV).

The protein belongs to the GrpE family. As to quaternary structure, homodimer.

Its subcellular location is the cytoplasm. Its function is as follows. Participates actively in the response to hyperosmotic and heat shock by preventing the aggregation of stress-denatured proteins, in association with DnaK and GrpE. It is the nucleotide exchange factor for DnaK and may function as a thermosensor. Unfolded proteins bind initially to DnaJ; upon interaction with the DnaJ-bound protein, DnaK hydrolyzes its bound ATP, resulting in the formation of a stable complex. GrpE releases ADP from DnaK; ATP binding to DnaK triggers the release of the substrate protein, thus completing the reaction cycle. Several rounds of ATP-dependent interactions between DnaJ, DnaK and GrpE are required for fully efficient folding. In Streptococcus agalactiae serotype Ia (strain ATCC 27591 / A909 / CDC SS700), this protein is Protein GrpE.